The primary structure comprises 203 residues: A-type ATP synthase subunit E (203 aa).

The protein belongs to the V-ATPase E subunit family. Has multiple subunits with at least A(3), B(3), C, D, E, F, H, I and proteolipid K(x).

Its subcellular location is the cell membrane. Component of the A-type ATP synthase that produces ATP from ADP in the presence of a proton gradient across the membrane. The polypeptide is A-type ATP synthase subunit E (Methanococcus vannielii (strain ATCC 35089 / DSM 1224 / JCM 13029 / OCM 148 / SB)).